Here is a 290-residue protein sequence, read N- to C-terminus: tRNA-cytidine(32) 2-sulfurtransferase (290 aa).

Positions 66–71 (SGGKDS) match the PP-loop motif motif. Residues Cys-141, Cys-144, and Cys-232 each contribute to the [4Fe-4S] cluster site.

This sequence belongs to the TtcA family. As to quaternary structure, homodimer. Requires Mg(2+) as cofactor. [4Fe-4S] cluster serves as cofactor.

It localises to the cytoplasm. It catalyses the reaction cytidine(32) in tRNA + S-sulfanyl-L-cysteinyl-[cysteine desulfurase] + AH2 + ATP = 2-thiocytidine(32) in tRNA + L-cysteinyl-[cysteine desulfurase] + A + AMP + diphosphate + H(+). It participates in tRNA modification. Functionally, catalyzes the ATP-dependent 2-thiolation of cytidine in position 32 of tRNA, to form 2-thiocytidine (s(2)C32). The sulfur atoms are provided by the cysteine/cysteine desulfurase (IscS) system. In Rhizobium etli (strain ATCC 51251 / DSM 11541 / JCM 21823 / NBRC 15573 / CFN 42), this protein is tRNA-cytidine(32) 2-sulfurtransferase.